A 178-amino-acid polypeptide reads, in one-letter code: MRTFNIATEKSHRINREITAPEIRLTGVEGEQLGIVKLFDALRLAEEKDVDLVEIAPTAQPPVCRLMDYGKFKYQEQKKAHEAKLKQKVIQVKEVKFRPGTDDGDYEVKLRNLKRFLDEGDRTKITLRFRGREMAHQEIGARMLDRLKTDLEEFGQVEQMPKMEGRQMVMMLAPKKRK.

It belongs to the IF-3 family. As to quaternary structure, monomer.

It is found in the cytoplasm. In terms of biological role, IF-3 binds to the 30S ribosomal subunit and shifts the equilibrium between 70S ribosomes and their 50S and 30S subunits in favor of the free subunits, thus enhancing the availability of 30S subunits on which protein synthesis initiation begins. The protein is Translation initiation factor IF-3 of Ralstonia nicotianae (strain ATCC BAA-1114 / GMI1000) (Ralstonia solanacearum).